We begin with the raw amino-acid sequence, 632 residues long: uncharacterized protein (632 aa).

4 consecutive transmembrane segments (helical) span residues 255–275 (LFYATMNTLLIMLIIIEELRV), 506–526 (IALLESLNFNWLDPFYGLTSI), 566–586 (MIFAYVAAAVVGFINFFSMVF), and 603–623 (IVVIAIASLLALFLIVIAVLF).

The protein resides in the cell membrane. This is an uncharacterized protein from Mycoplasma pneumoniae (strain ATCC 29342 / M129 / Subtype 1) (Mycoplasmoides pneumoniae).